Consider the following 404-residue polypeptide: Alpha-galactosidase A (404 aa).

The N-terminal stretch at M1–A23 is a signal peptide. 2 disulfides stabilise this stretch: C45/C77 and C124/C154. D152 serves as the catalytic Nucleophile. E185 to N189 is a binding site for substrate. D207 acts as the Proton donor in catalysis.

It belongs to the glycosyl hydrolase 27 family.

It carries out the reaction Hydrolysis of terminal, non-reducing alpha-D-galactose residues in alpha-D-galactosides, including galactose oligosaccharides, galactomannans and galactolipids.. Hydrolyzes galactomannan found in plant cell wall, by cleaving alpha-1,6-D-galactose side-chains from the mannan backbone. Appears to act in synergy with mannanase (ManA) to elicit hydrolysis of galactomannan. Has greater activity against galactomannans with decreased degree of polymerisation values. To a lesser extent, is also able to degrade other galactosides containing alpha-1,6-linked D-galactose, such as melibiose and stachyose. The sequence is that of Alpha-galactosidase A (agaA) from Cellvibrio japonicus (strain Ueda107) (Pseudomonas fluorescens subsp. cellulosa).